Reading from the N-terminus, the 1363-residue chain is Spike glycoprotein (1363 aa).

The signal sequence occupies residues 1–13 (MFLILLISLPMAL). The Extracellular portion of the chain corresponds to 14-1307 (AVIGDLKCTT…GTYEYYVKWP (1294 aa)). One can recognise a BetaCoV S1-NTD domain in the interval 15–298 (VIGDLKCTTV…DFMSEIKCKT (284 aa)). Intrachain disulfides connect Cys-21-Cys-165, Cys-160-Cys-193, Cys-172-Cys-252, Cys-286-Cys-296, and Cys-331-Cys-356. N-linked (GlcNAc...) asparagine; by host glycosylation is found at Asn-59 and Asn-133. Asn-198 is a glycosylation site (N-linked (GlcNAc...) asparagine; by host). One can recognise a BetaCoV S1-CTD domain in the interval 329 to 617 (PDCNIEAWLN…DVNSGTTCST (289 aa)). N-linked (GlcNAc...) asparagine; by host glycosylation occurs at Asn-359. Disulfide bonds link Cys-374–Cys-427 and Cys-386–Cys-615. Asn-437, Asn-649, Asn-676, Asn-696, Asn-714, Asn-739, and Asn-788 each carry an N-linked (GlcNAc...) asparagine; by host glycan. 2 fusion peptide regions span residues 914–935 (SAIE…VEAY) and 933–953 (EAYN…VQSY). Asn-937 carries an N-linked (GlcNAc...) asparagine; by host glycan. Cys-938 and Cys-949 are disulfide-bonded. The interval 1014-1064 (QKLIANAFNNALDAIQEGFDATNSALVKIQAVVNANAEALNNLLQQLSNRF) is heptad repeat 1. The stretch at 1043 to 1087 (QAVVNANAEALNNLLQQLSNRFGAISSSLQEILSRLDALEAQAQI) forms a coiled coil. Residues Asn-1194, Asn-1224, Asn-1234, Asn-1253, Asn-1267, and Asn-1288 are each glycosylated (N-linked (GlcNAc...) asparagine; by host). A heptad repeat 2 region spans residues 1258-1296 (APDLSLDYINVTFLDLQDEMNRLQEAIKVLNQSYINLKD). Positions 1269-1297 (TFLDLQDEMNRLQEAIKVLNQSYINLKDI) form a coiled coil. The helical transmembrane segment at 1308 to 1328 (WYVWLLIGLAGVAMLVLLFFI) threads the bilayer. Topologically, residues 1329-1363 (CCCTGCGTSCFKKCGGCCDDYTGHQELVIKTSHDD) are cytoplasmic. Residues 1359–1363 (TSHDD) carry the KxHxx motif.

Belongs to the betacoronaviruses spike protein family. Homotrimer; each monomer consists of a S1 and a S2 subunit. The resulting peplomers protrude from the virus surface as spikes. Post-translationally, specific enzymatic cleavages in vivo yield mature proteins. The precursor is processed into S1 and S2 by host cell furin or another cellular protease to yield the mature S1 and S2 proteins. Additionally, a second cleavage leads to the release of a fusion peptide after viral attachment to host cell receptor. In terms of processing, the cytoplasmic Cys-rich domain is palmitoylated. Spike glycoprotein is digested within host endosomes.

It is found in the virion membrane. Its subcellular location is the host endoplasmic reticulum-Golgi intermediate compartment membrane. The protein resides in the host cell membrane. Attaches the virion to the cell membrane by interacting with host receptor, initiating the infection. Its function is as follows. Mediates fusion of the virion and cellular membranes by acting as a class I viral fusion protein. Under the current model, the protein has at least three conformational states: pre-fusion native state, pre-hairpin intermediate state, and post-fusion hairpin state. During viral and target cell membrane fusion, the coiled coil regions (heptad repeats) assume a trimer-of-hairpins structure, positioning the fusion peptide in close proximity to the C-terminal region of the ectodomain. The formation of this structure appears to drive apposition and subsequent fusion of viral and target cell membranes. In terms of biological role, acts as a viral fusion peptide which is unmasked following S2 cleavage occurring upon virus endocytosis. The protein is Spike glycoprotein of Bos taurus (Bovine).